The sequence spans 418 residues: Serine hydroxymethyltransferase (418 aa).

Residues L121 and 125–127 (GHL) each bind (6S)-5,6,7,8-tetrahydrofolate. Position 230 is an N6-(pyridoxal phosphate)lysine (K230). Position 356–358 (356–358 (SPF)) interacts with (6S)-5,6,7,8-tetrahydrofolate.

This sequence belongs to the SHMT family. Homodimer. Pyridoxal 5'-phosphate is required as a cofactor.

It localises to the cytoplasm. It catalyses the reaction (6R)-5,10-methylene-5,6,7,8-tetrahydrofolate + glycine + H2O = (6S)-5,6,7,8-tetrahydrofolate + L-serine. It functions in the pathway one-carbon metabolism; tetrahydrofolate interconversion. Its pathway is amino-acid biosynthesis; glycine biosynthesis; glycine from L-serine: step 1/1. Functionally, catalyzes the reversible interconversion of serine and glycine with tetrahydrofolate (THF) serving as the one-carbon carrier. This reaction serves as the major source of one-carbon groups required for the biosynthesis of purines, thymidylate, methionine, and other important biomolecules. Also exhibits THF-independent aldolase activity toward beta-hydroxyamino acids, producing glycine and aldehydes, via a retro-aldol mechanism. The polypeptide is Serine hydroxymethyltransferase (Pseudoalteromonas translucida (strain TAC 125)).